We begin with the raw amino-acid sequence, 283 residues long: Co-chaperone protein DjlA (283 aa).

Residues 1–6 (MQIFGK) are Periplasmic-facing. The helical transmembrane segment at 7–30 (ILGGFFGFLFGGFFGAALGIFIGH) threads the bilayer. The Cytoplasmic portion of the chain corresponds to 31–283 (QFDKAKRMAN…DLIKKEKGIK (253 aa)). Gly residues predominate over residues 188-197 (QGGGFSGHQS). The disordered stretch occupies residues 188–210 (QGGGFSGHQSGGSHQQGQWQQAS). Low complexity predominate over residues 198–210 (GGSHQQGQWQQAS). The 67-residue stretch at 217 to 283 (DAYNLLGISE…DLIKKEKGIK (67 aa)) folds into the J domain.

As to quaternary structure, homodimer.

It localises to the cell inner membrane. Regulatory DnaK co-chaperone. Direct interaction between DnaK and DjlA is needed for the induction of the wcaABCDE operon, involved in the synthesis of a colanic acid polysaccharide capsule, possibly through activation of the RcsB/RcsC phosphotransfer signaling pathway. The colanic acid capsule may help the bacterium survive conditions outside the host. The polypeptide is Co-chaperone protein DjlA (Aliivibrio fischeri (strain ATCC 700601 / ES114) (Vibrio fischeri)).